Here is a 158-residue protein sequence, read N- to C-terminus: Ecotin-like protein 2 (158 aa).

The protein belongs to the protease inhibitor I11 (ecotin) family.

This is Ecotin-like protein 2 from Leishmania major.